Here is a 354-residue protein sequence, read N- to C-terminus: 3'-5' exonuclease (354 aa).

The segment at 1-120 (MERFLTKMPI…PSPEKEKPEK (120 aa)) is disordered. 2 stretches are compositionally biased toward basic and acidic residues: residues 13 to 30 (KANE…ETPK) and 37 to 50 (KKDT…KENA). Residues 59 to 70 (TKGRPGRPAAKR) are compositionally biased toward basic residues. Residues 71–91 (KNLDTPDVKDEKIAMEEENPP) show a composition bias toward basic and acidic residues. Phosphoserine occurs at positions 104, 110, and 112. Positions 149-314 (WVEKQKDDVV…GQVIYRELER (166 aa)) constitute a 3'-5' exonuclease domain. 3 residues coordinate Mg(2+): D163, E165, and D301.

It belongs to the WRNexo family.

The protein resides in the nucleus. In terms of biological role, has exonuclease activity on both single-stranded and duplex templates bearing overhangs, but not blunt ended duplex DNA, and cleaves in a 3'-5' direction. Essential for the formation of DNA replication focal centers. Has an important role in maintaining genome stability. In Drosophila simulans (Fruit fly), this protein is 3'-5' exonuclease.